Here is a 325-residue protein sequence, read N- to C-terminus: Protease HtpX homolog 2 (325 aa).

Transmembrane regions (helical) follow at residues 10-30 (LNMALATLGITLLGFALALAV) and 41-61 (VGLILSILIFIFFLNIIQWLF). Residue His147 coordinates Zn(2+). Residue Glu148 is part of the active site. His151 contributes to the Zn(2+) binding site. The next 2 helical transmembrane spans lie at 159-179 (LLMAVGLIPALIYYLGWWLFW) and 196-216 (LVFLLGIIMMAVSFVFQLLVL). Residue Glu223 coordinates Zn(2+).

Belongs to the peptidase M48B family. Requires Zn(2+) as cofactor.

It localises to the cell membrane. The chain is Protease HtpX homolog 2 from Saccharolobus solfataricus (strain ATCC 35092 / DSM 1617 / JCM 11322 / P2) (Sulfolobus solfataricus).